Here is a 230-residue protein sequence, read N- to C-terminus: Ubiquitin carboxyl-terminal hydrolase isozyme L3 (230 aa).

One can recognise a UCH catalytic domain in the interval 5–229 (RWLPLEANPE…LRFNAIALSA (225 aa)). Residues 8 to 13 (PLEANP) are interaction with ubiquitin. The active-site Nucleophile is the Cys-95. A Phosphoserine modification is found at Ser-130. An interaction with ubiquitin. Crossover loop which restricts access of large ubiquitin adducts to the active site region spans residues 152–159 (AHEGQTEA). The Proton donor role is filled by His-169. Residues 219-224 (ELRFNA) are interaction with ubiquitin.

Belongs to the peptidase C12 family. In terms of assembly, preferentially binds diubiquitin; the interaction does not hydrolyze diubiquitin but, in vitro, inhibits the hydrolyzing activity on other substrates.

Its subcellular location is the cytoplasm. It catalyses the reaction Thiol-dependent hydrolysis of ester, thioester, amide, peptide and isopeptide bonds formed by the C-terminal Gly of ubiquitin (a 76-residue protein attached to proteins as an intracellular targeting signal).. With respect to regulation, inhibited by monoubiquitin and diubiquitin. In terms of biological role, deubiquitinating enzyme (DUB) that controls levels of cellular ubiquitin through processing of ubiquitin precursors and ubiquitinated proteins. Thiol protease that recognizes and hydrolyzes a peptide bond at the C-terminal glycine of either ubiquitin or NEDD8. Has a 10-fold preference for Arg and Lys at position P3''. Deubiquitinates ENAC in apical compartments, thereby regulating apical membrane recycling. Indirectly increases the phosphorylation of IGFIR, AKT and FOXO1 and promotes insulin-signaling and insulin-induced adipogenesis. Required for stress-response retinal, skeletal muscle and germ cell maintenance. May be involved in working memory. Can hydrolyze UBB(+1), a mutated form of ubiquitin which is not effectively degraded by the proteasome. The chain is Ubiquitin carboxyl-terminal hydrolase isozyme L3 (UCHL3) from Bos taurus (Bovine).